Reading from the N-terminus, the 846-residue chain is DNA mismatch repair protein MutS (846 aa).

An ATP-binding site is contributed by 610-617 (GPNMGGKS).

It belongs to the DNA mismatch repair MutS family.

Its function is as follows. This protein is involved in the repair of mismatches in DNA. It is possible that it carries out the mismatch recognition step. This protein has a weak ATPase activity. This chain is DNA mismatch repair protein MutS, found in Legionella pneumophila (strain Corby).